The sequence spans 301 residues: Vomeronasal type-1 receptor 4 (301 aa).

Over 1–15 (MASRYVAVGMMLSQT) the chain is Extracellular. The helical transmembrane segment at 16 to 36 (VVGVLGSFSLLLHYLSLHYIG) threads the bilayer. Topologically, residues 37–48 (CRLRSADLIVKH) are cytoplasmic. A helical membrane pass occupies residues 49–69 (LIAASFLTLLCKGVPQTMAAF). Over 70–88 (RVRYFLNAIGCKLVFYLHR) the chain is Extracellular. A helical transmembrane segment spans residues 89 to 107 (VGRGVSTGTTCLLSVFQVI). The Cytoplasmic portion of the chain corresponds to 108–126 (TVSSRKSRWAKLKEKAPKH). A helical transmembrane segment spans residues 127 to 147 (VGFSVLLCWILCMLVNIIFPI). Residues 148–185 (YVTGKRNHTNITVNKDLGDCCGRGNNKIAQTLRAMLLS) lie on the Extracellular side of the membrane. N-linked (GlcNAc...) asparagine glycans are attached at residues Asn154 and Asn157. A helical membrane pass occupies residues 186-206 (FPDVLCLGFMLWASSSMVCIL). Over 207-234 (HRHKQRVQHIHRSNLSPRASPENRATQS) the chain is Cytoplasmic. The chain crosses the membrane as a helical span at residues 235-255 (ILIPVSTFVSSYTLSCLLQVC). The Extracellular portion of the chain corresponds to 256–264 (MALLDNPNS). The helical transmembrane segment at 265 to 285 (LLVNTSALMSACFPTLSPFVL) threads the bilayer. Topologically, residues 286–301 (MSCDPSVYRLCFAWKR) are cytoplasmic.

This sequence belongs to the G-protein coupled receptor 1 family.

The protein localises to the cell membrane. Putative pheromone receptor. The protein is Vomeronasal type-1 receptor 4 (VN1R4) of Pongo pygmaeus (Bornean orangutan).